The following is a 429-amino-acid chain: Chordin-like protein 2 (429 aa).

Positions 1–25 (MVPEVRVLSSLLGLALLWFPLDSHA) are cleaved as a signal peptide. 2 VWFC domains span residues 31–96 (MFCL…PKCV) and 109–175 (KSCQ…QACK). Asparagine 114 is a glycosylation site (N-linked (GlcNAc...) asparagine). Serine 182 bears the Phosphoserine; by FAM20C mark. The tract at residues 182–224 (SDEEDSVQSLHGVRHPQDPCSSDAGRKRGPGTPAPTGLSAPLS) is disordered. The VWFC 3 domain maps to 250-315 (KACVHGGKTY…VAGKCCKICP (66 aa)).

In terms of assembly, interacts with GDF5. May interact with BMP2, BMP4, BMP5, BMP6, BMP7 and INHBA. Phosphorylated by FAM20C in the extracellular medium. As to expression, highly expressed in uterus. Moderately expressed in heart, liver, prostate, testis and ovary. Weakly expressed in skeletal muscle, kidney, spleen, small intestine and colon. Expressed in the secretory epithelial cells of uterine endometrium, fallopian tubes, endocervical glands, bladder and prostate, as well as the transitional epithelium of the urinary bladder, and in bone osteoblasts (at protein level). In normal cartilage, expression was confined in a few chondrocytes in the superficial zone as well as in the middle zone. In diseased cartilage coming from osteoarthritic patients, expression was limited to the middle zone of chondrocytes. Isoform 1 and isoform 2 are expressed in fetal cerebellum and heart, while only isoform 2 is detected in fetal spleen. Isoform 2 present in plasma.

It localises to the secreted. The protein resides in the cytoplasm. Functionally, may inhibit BMPs activity by blocking their interaction with their receptors. Has a negative regulator effect on the cartilage formation/regeneration from immature mesenchymal cells, by preventing or reducing the rate of matrix accumulation. Implicated in tumor angiogenesis. May play a role during myoblast and osteoblast differentiation, and maturation. The chain is Chordin-like protein 2 (CHRDL2) from Homo sapiens (Human).